We begin with the raw amino-acid sequence, 92 residues long: Small ribosomal subunit protein uS19 (92 aa).

The protein belongs to the universal ribosomal protein uS19 family.

In terms of biological role, protein S19 forms a complex with S13 that binds strongly to the 16S ribosomal RNA. This Caulobacter vibrioides (strain ATCC 19089 / CIP 103742 / CB 15) (Caulobacter crescentus) protein is Small ribosomal subunit protein uS19.